The chain runs to 229 residues: UPF0173 metal-dependent hydrolase SAR1785 (229 aa).

Belongs to the UPF0173 family.

In Staphylococcus aureus (strain MRSA252), this protein is UPF0173 metal-dependent hydrolase SAR1785.